We begin with the raw amino-acid sequence, 25 residues long: Oxyopinin-3c (25 aa).

As to expression, expressed by the venom gland.

The protein localises to the secreted. Its function is as follows. May have cytolytic and antimicrobial activity. The sequence is that of Oxyopinin-3c from Oxyopes takobius (Lynx spider).